The primary structure comprises 1008 residues: PAN2-PAN3 deadenylation complex catalytic subunit PAN2 (1008 aa).

WD repeat units follow at residues 29–68 (GQLTDTLPLTFDLAEDLVWAGDTNGIVSSYYGETLQPYSR), 110–149 (PSLGNNLCMTFTHGPTEFVVGGNPGKLVVVNSERGDVTRV), 158–198 (HMAG…FSDV), 200–236 (VQDNVVMTCGFSAASTGHRIDPLIKVWDLRMMRAMAP), and 277–316 (AEVALVNGVKLSPRGHHFVVSDTSGQLQLWSDEPQSSFAE). The interval 314-449 (FAEFSAPTAF…TCTEASMSSK (136 aa)) is linker. In terms of domain architecture, USP spans 450–755 (KVPRLYRKLE…RTVMMVYAVG (306 aa)). The Exonuclease domain maps to 808-976 (AIDAEFVVLK…EDSHTALLLY (169 aa)). A divalent metal cation-binding residues include Asp810, Glu812, Asp915, and Asp968.

This sequence belongs to the peptidase C19 family. PAN2 subfamily. In terms of assembly, forms a heterotrimer with an asymmetric homodimer of the regulatory subunit PAN3 to form the poly(A)-nuclease (PAN) deadenylation complex. A divalent metal cation serves as cofactor.

It localises to the cytoplasm. It catalyses the reaction Exonucleolytic cleavage of poly(A) to 5'-AMP.. Positively regulated by the regulatory subunit PAN3. Functionally, catalytic subunit of the poly(A)-nuclease (PAN) deadenylation complex, one of two cytoplasmic mRNA deadenylases involved in mRNA turnover. PAN specifically shortens poly(A) tails of RNA and the activity is stimulated by poly(A)-binding protein PAB1. PAN deadenylation is followed by rapid degradation of the shortened mRNA tails by the CCR4-NOT complex. Deadenylated mRNAs are then degraded by two alternative mechanisms, namely exosome-mediated 3'-5' exonucleolytic degradation, or deadenylation-dependent mRNA decaping and subsequent 5'-3' exonucleolytic degradation by XRN1. May also be involved in post-transcriptional maturation of mRNA poly(A) tails. The polypeptide is PAN2-PAN3 deadenylation complex catalytic subunit PAN2 (Yarrowia lipolytica (strain CLIB 122 / E 150) (Yeast)).